Reading from the N-terminus, the 437-residue chain is D-aminoacyl-tRNA deacylase (437 aa).

Belongs to the DtdA deacylase family. In terms of assembly, monomer. Zn(2+) is required as a cofactor.

The enzyme catalyses a D-aminoacyl-tRNA + H2O = a tRNA + a D-alpha-amino acid + H(+). It carries out the reaction glycyl-tRNA(Ala) + H2O = tRNA(Ala) + glycine + H(+). D-aminoacyl-tRNA deacylase with broad substrate specificity. By recycling D-aminoacyl-tRNA to D-amino acids and free tRNA molecules, this enzyme counteracts the toxicity associated with the formation of D-aminoacyl-tRNA entities in vivo. This Methanoculleus marisnigri (strain ATCC 35101 / DSM 1498 / JR1) protein is D-aminoacyl-tRNA deacylase.